A 167-amino-acid polypeptide reads, in one-letter code: Large ribosomal subunit protein uL10 (167 aa).

The protein belongs to the universal ribosomal protein uL10 family. As to quaternary structure, part of the ribosomal stalk of the 50S ribosomal subunit. The N-terminus interacts with L11 and the large rRNA to form the base of the stalk. The C-terminus forms an elongated spine to which L12 dimers bind in a sequential fashion forming a multimeric L10(L12)X complex.

Functionally, forms part of the ribosomal stalk, playing a central role in the interaction of the ribosome with GTP-bound translation factors. This Chromohalobacter salexigens (strain ATCC BAA-138 / DSM 3043 / CIP 106854 / NCIMB 13768 / 1H11) protein is Large ribosomal subunit protein uL10.